Here is a 163-residue protein sequence, read N- to C-terminus: Small ribosomal subunit protein uS5 (163 aa).

One can recognise an S5 DRBM domain in the interval 11 to 74 (LTDRVVHINR…EQAKKNLIRV (64 aa)).

Belongs to the universal ribosomal protein uS5 family. Part of the 30S ribosomal subunit. Contacts proteins S4 and S8.

Functionally, with S4 and S12 plays an important role in translational accuracy. Located at the back of the 30S subunit body where it stabilizes the conformation of the head with respect to the body. This Syntrophotalea carbinolica (strain DSM 2380 / NBRC 103641 / GraBd1) (Pelobacter carbinolicus) protein is Small ribosomal subunit protein uS5.